Here is a 616-residue protein sequence, read N- to C-terminus: Zinc metalloproteinase-disintegrin-like ecarin (616 aa).

The N-terminal stretch at 1-20 is a signal peptide; that stretch reads MIQILLVIICLAVFPYQGCS. The propeptide occupies 21-190; it reads IILGSGNVND…EPIKKTLGLI (170 aa). The 197-residue stretch at 201-397 folds into the Peptidase M12B domain; it reads KFIELVVVVD…YNPKCILDPP (197 aa). Glu204 contacts Ca(2+). Residues Asn219 and Asn261 are each glycosylated (N-linked (GlcNAc...) asparagine). Residue Asp288 participates in Ca(2+) binding. Asn295 and Asn326 each carry an N-linked (GlcNAc...) asparagine glycan. Disulfide bonds link Cys312-Cys392, Cys352-Cys376, and Cys354-Cys359. His337 contacts Zn(2+). The active site involves Glu338. Zn(2+) is bound by residues His341 and His347. Cys392, Val407, Asn410, Ile412, Glu414, Glu417, and Asp420 together coordinate Ca(2+). One can recognise a Disintegrin domain in the interval 405-491; sequence PAVCGNEIWE…ECPRNEFQRN (87 aa). Intrachain disulfides connect Cys408/Cys437, Cys419/Cys432, Cys421/Cys427, Cys431/Cys454, Cys445/Cys451, Cys450/Cys476, Cys463/Cys483, Cys470/Cys502, Cys495/Cys507, Cys514/Cys567, Cys529/Cys578, Cys542/Cys555, Cys562/Cys604, and Cys598/Cys609. A D/ECD-tripeptide motif is present at residues 469-471; that stretch reads DCD. Ca(2+) contacts are provided by Asp471, Val472, and Asn486. The N-linked (GlcNAc...) asparagine glycan is linked to Asn497.

It belongs to the venom metalloproteinase (M12B) family. P-III subfamily. P-IIIa sub-subfamily. Monomer. Zn(2+) serves as cofactor. In terms of tissue distribution, expressed by the venom gland.

The protein localises to the secreted. Its function is as follows. Snake venom zinc metalloproteinase that catalyzes the conversion of prothrombin (F2) to alpha-thrombin through formation of a thrombin intermediate, thereby functioning as a procoagulant protein. Has a low Km for prothrombin and a high kcat. Cleaves the 320-Arg-Ile-321 bond in prothrombin and produces meizothrombin which is ultimately converted to alpha-thrombin by autolysis. The chain is Zinc metalloproteinase-disintegrin-like ecarin from Echis carinatus (Saw-scaled viper).